Reading from the N-terminus, the 62-residue chain is Disintegrin atropoimin (62 aa).

One can recognise a Disintegrin domain in the interval Glu-1 to Gly-62. Intrachain disulfides connect Cys-6-Cys-21, Cys-8-Cys-16, Cys-15-Cys-38, Cys-29-Cys-35, and Cys-34-Cys-48. Positions Gly-41 to Asp-42 match the Cell attachment site motif.

The protein belongs to the venom metalloproteinase (M12B) family. P-II subfamily. P-IIa sub-subfamily. As to quaternary structure, monomer. As to expression, expressed by the venom gland.

The protein resides in the secreted. In terms of biological role, inhibits ADP- (IC(50)=63 nM) and collagen-induced (IC(50)=53 nM) aggregation of human platelets. In vitro, inhibits adhesion of endothelial cells to vitronectin, type-I collagen and, to a lower degree, fibronectin and laminin. The protein is Disintegrin atropoimin of Metlapilcoatlus mexicanus (Central American jumping pitviper).